A 379-amino-acid polypeptide reads, in one-letter code: Chaperone protein DnaJ (379 aa).

The region spanning 5-70 is the J domain; the sequence is DYYEVLGVAK…QKRAAYDQYG (66 aa). A CR-type zinc finger spans residues 139–217; the sequence is GYDTQIRVPS…CHGAGKVKET (79 aa). Residues Cys152, Cys155, Cys169, Cys172, Cys191, Cys194, Cys205, and Cys208 each contribute to the Zn(2+) site. CXXCXGXG motif repeat units follow at residues 152-159, 169-176, 191-198, and 205-212; these read CEICHGSG, CPTCSGSG, CPKCHGTG, and CGHCHGAG.

Belongs to the DnaJ family. Homodimer. It depends on Zn(2+) as a cofactor.

Its subcellular location is the cytoplasm. In terms of biological role, participates actively in the response to hyperosmotic and heat shock by preventing the aggregation of stress-denatured proteins and by disaggregating proteins, also in an autonomous, DnaK-independent fashion. Unfolded proteins bind initially to DnaJ; upon interaction with the DnaJ-bound protein, DnaK hydrolyzes its bound ATP, resulting in the formation of a stable complex. GrpE releases ADP from DnaK; ATP binding to DnaK triggers the release of the substrate protein, thus completing the reaction cycle. Several rounds of ATP-dependent interactions between DnaJ, DnaK and GrpE are required for fully efficient folding. Also involved, together with DnaK and GrpE, in the DNA replication of plasmids through activation of initiation proteins. The chain is Chaperone protein DnaJ from Paraburkholderia phytofirmans (strain DSM 17436 / LMG 22146 / PsJN) (Burkholderia phytofirmans).